The following is a 113-amino-acid chain: UPF0482 protein CKO_01577 (113 aa).

Residues 1–28 (MNNTLSKRLCLTAMLALGAVVYTTSAFA) form the signal peptide. Residues 44–67 (RQHAAMEKEQWNDTRSLRQKVNTR) are disordered. Residues 47-59 (AAMEKEQWNDTRS) are compositionally biased toward basic and acidic residues.

The protein belongs to the UPF0482 family.

This is UPF0482 protein CKO_01577 from Citrobacter koseri (strain ATCC BAA-895 / CDC 4225-83 / SGSC4696).